Reading from the N-terminus, the 896-residue chain is DNA mismatch repair protein MutS (896 aa).

638–645 (GPNMSGKS) lines the ATP pocket.

Belongs to the DNA mismatch repair MutS family.

In terms of biological role, this protein is involved in the repair of mismatches in DNA. It is possible that it carries out the mismatch recognition step. This protein has a weak ATPase activity. This is DNA mismatch repair protein MutS from Fusobacterium nucleatum subsp. nucleatum (strain ATCC 25586 / DSM 15643 / BCRC 10681 / CIP 101130 / JCM 8532 / KCTC 2640 / LMG 13131 / VPI 4355).